The sequence spans 203 residues: Chaperonin-like RbcX protein 2, chloroplastic (203 aa).

Residues 1 to 78 constitute a chloroplast transit peptide; the sequence is MVSAWFVVGS…RKSKKLLIVN (78 aa).

Belongs to the RbcX family. In terms of assembly, homodimer. Interacts with rbcL, atpB and RBCS-1B.

It is found in the plastid. It localises to the chloroplast stroma. In terms of biological role, chaperone involved in RuBisCO assembly process. The sequence is that of Chaperonin-like RbcX protein 2, chloroplastic from Arabidopsis thaliana (Mouse-ear cress).